Here is a 164-residue protein sequence, read N- to C-terminus: Urease subunit beta (164 aa).

Composition is skewed to polar residues over residues 1 to 10 (MSTKTNSTKA) and 20 to 32 (TNRG…GYSE). A disordered region spans residues 1-32 (MSTKTNSTKATSEKTDSLKTNRGTKSSAGYSE).

This sequence belongs to the urease beta subunit family. As to quaternary structure, heterotrimer of UreA (gamma), UreB (beta) and UreC (alpha) subunits. Three heterotrimers associate to form the active enzyme.

The protein resides in the cytoplasm. The enzyme catalyses urea + 2 H2O + H(+) = hydrogencarbonate + 2 NH4(+). It participates in nitrogen metabolism; urea degradation; CO(2) and NH(3) from urea (urease route): step 1/1. The sequence is that of Urease subunit beta from Yersinia enterocolitica serotype O:8 / biotype 1B (strain NCTC 13174 / 8081).